Reading from the N-terminus, the 370-residue chain is Gibberellin 3-beta-dioxygenase 2-2 (370 aa).

Residues 205–306 enclose the Fe2OG dioxygenase domain; that stretch reads MTATMHLNWY…RISLGYFLGP (102 aa). Residues H229, D231, and H287 each coordinate Fe cation. The active site involves R297.

This sequence belongs to the iron/ascorbate-dependent oxidoreductase family. GA3OX subfamily. L-ascorbate serves as cofactor. The cofactor is Fe cation.

It catalyses the reaction gibberellin A20 + 2-oxoglutarate + O2 = gibberellin A1 + succinate + CO2. Its function is as follows. Converts the inactive gibberellin precursors GA9 and GA20 in the bioactives gibberellins GA4 and GA1. The sequence is that of Gibberellin 3-beta-dioxygenase 2-2 (GA3ox2-2) from Triticum aestivum (Wheat).